Here is a 619-residue protein sequence, read N- to C-terminus: Very-long-chain aldehyde decarbonylase GL1-4 (619 aa).

5 consecutive transmembrane segments (helical) span residues 45 to 65 (IAFS…QIWI), 94 to 114 (GWDD…LAMP), 126 to 146 (GAVV…YWFH), 178 to 198 (FAEH…TIYL), and 325 to 345 (AWYM…AWIY). Positions 138–272 (VEFLYYWFHR…MPFYDYIYNT (135 aa)) constitute a Fatty acid hydroxylase domain.

This sequence belongs to the sterol desaturase family. In terms of assembly, homodimer. In terms of tissue distribution, expressed ubiquitously at low levels, with higher accumulation in developing panicles, shoots and flag leaves.

It is found in the endoplasmic reticulum membrane. The enzyme catalyses a long-chain fatty aldehyde + 2 NADPH + O2 + H(+) = a long-chain alkane + formate + 2 NADP(+) + H2O. In terms of biological role, aldehyde decarbonylase involved in the conversion of aldehydes to alkanes. Core component of a very-long-chain alkane synthesis complex. This chain is Very-long-chain aldehyde decarbonylase GL1-4, found in Oryza sativa subsp. japonica (Rice).